The following is a 617-amino-acid chain: Mitochondrial Rho GTPase 2 (617 aa).

The Cytoplasmic portion of the chain corresponds to 1 to 590; sequence MKRDVRILLL…LNGSDMSSTS (590 aa). The 167-residue stretch at 2-168 folds into the Miro 1 domain; the sequence is KRDVRILLLG…FYYAQKAVLH (167 aa). Residues G16, K17, T18, and S19 each contribute to the GTP site. T18 serves as a coordination point for Mg(2+). D57 contacts Mg(2+). GTP contacts are provided by S59, N118, K119, D121, A149, and K150. EF-hand domains are found at residues 184–219 and 304–339; these read QCVR…CFGN and LGHQ…LPYM. Positions 197, 199, 201, 208, 317, 319, 321, and 328 each coordinate Ca(2+). The Miro 2 domain occupies 416-578; that stretch reads RTVFLCKVIG…YSKLTWAAMY (163 aa). The GTP site is built by G428, G430, K431, and T432. Positions 432 and 474 each coordinate Mg(2+). The GTP site is built by K528 and D530. Residues 591 to 613 form a helical; Anchor for type IV membrane protein membrane-spanning segment; the sequence is FWLRVTLGATIAAMLGFALYRAF. At 614 to 617 the chain is on the mitochondrial intermembrane side; the sequence is SRHK.

This sequence belongs to the mitochondrial Rho GTPase family. As to quaternary structure, homodimer.

The protein resides in the mitochondrion outer membrane. The catalysed reaction is GTP + H2O = GDP + phosphate + H(+). It carries out the reaction ATP + H2O = ADP + phosphate + H(+). The enzyme catalyses UTP + H2O = UDP + phosphate + H(+). In terms of biological role, atypical mitochondrial nucleoside-triphosphatase (NTPase) involved in mitochondrial trafficking. Probably involved in control of anterograde transport of mitochondria and their subcellular distribution. Can hydrolyze GTP, ATP and UTP. This is Mitochondrial Rho GTPase 2 (rhot2) from Danio rerio (Zebrafish).